The chain runs to 1171 residues: MERHRARALGRDSKSSRRKGLQSAPPAGPYEPGEKRPKLHLNIRTLTDDMLDKFASIRIPGSKKERPPLPHLKTVSGISDSSSLSSETMENNPKALPESEVLKLFEKMMEDMNLNEDKKAPLREKDFGIKKEMVMQYINTASKTGSLRSSRQISPQEFLHELKMGYTDERLFTYLESLRVSLTSHPVSWVQSFGHEGLGLLLDILEKLINGQIQEKVVKKTQHKVIQCLRALMNTQYGLERIMSDKRSLSLLAKAMDPRQPAMMADVVKLLSAVCIVGEESILEEVLEALTSAGEERKIDRFFSIVEGLRHNSVNLQVACMQLINALVTSPDDLDFRLHLRNEFMRCGLKEILPNLKGIKNDGLDIQLKVFDEHKEEDLSEFFHRLEDIRAELDEASDVYSMLWDTVKETRAEGHFLSILQHLLLIRNDRFIREQYFKLIDECVSQIVLHRDGTDPDFTYRKRLDLDLSQFVDVCIDQAKLDEWEEKASEHCKKFEKECTDHQETQAQLQKREAKINELQAELQAFKSQFGALPPGTKIPLQPSVEGEAGPSALPPAPPALSGGVPPPPPPPPPPPPPLPGMPMPFGGPVPPPPPLGFLGGQSSIPLNLPFGLKPKKEFKPEISMRRLNWLKIGPNEMSENCFWIKVNENKYENRDLLCKLENTFCCQEKEKRNTNDFDEKKVIKKRMKELKFLDPKIAQNLSIFLSSFRVPYEKIRTMILEVDETQLSESMIQNLIKHLPDEEQLKSLSQFRSDYNSLCEPEQFAVVMSNVKRLRPRLSAILFKLQFEEQVNNIKPDIMAVSTACEEIKKSKGFSKLLELVLLMGNYMNAGSRNAQTFGFDLSSLCKLKDTKSADQKTTLLHFLVDVCEEKHADILHFVDDLAHLDKASRVSVEMLEKNVKQMGRQLQQLEKNLETFPPPEDLHDKFVIKMSSFVISANEQYEKLSTLLGSMTQLYQSIMGYYAVDMKKVSVEEFFNDLNNFRTSFMLALKENIKKREAAEKEKRARIAKERAEKERLERQQEKKRLLEMKTEGDETGVMDSLLEALQSGAAFRDRRKRTPKLKDIRQSLSPMSQRPVLKVCNHENQKMQLTEGSRPHHSINCNSTRTPVAKELNYNLDTHASTGRIKAVEKEACNAESNKKKEMELLGSVAKSESVPEVEALLARLRAL.

Residues 1–15 (MERHRARALGRDSKS) show a composition bias toward basic and acidic residues. The interval 1–40 (MERHRARALGRDSKSSRRKGLQSAPPAGPYEPGEKRPKLH) is disordered. The short motif at 16–39 (SRRKGLQSAPPAGPYEPGEKRPKL) is the Nuclear localization signal element. T47 bears the Phosphothreonine mark. Position 56 is a phosphoserine (S56). Positions 60 to 95 (PGSKKERPPLPHLKTVSGISDSSSLSSETMENNPKA) are disordered. Residues 76 to 86 (SGISDSSSLSS) show a composition bias toward low complexity. A GBD/FH3 domain is found at 93–455 (PKALPESEVL…QIVLHRDGTD (363 aa)). A Phosphoserine modification is found at S154. Coiled-coil stretches lie at residues 373 to 403 (EHKEEDLSEFFHRLEDIRAELDEASDVYSML) and 478 to 533 (QAKL…FGAL). The tract at residues 532–601 (ALPPGTKIPL…PPPPLGFLGG (70 aa)) is disordered. An FH1 domain is found at 540–610 (PLQPSVEGEA…GQSSIPLNLP (71 aa)). Pro residues predominate over residues 553–596 (ALPPAPPALSGGVPPPPPPPPPPPPPLPGMPMPFGGPVPPPPPL). Residue S604 is modified to Phosphoserine. The FH2 domain maps to 615–1013 (PKKEFKPEIS…EKRARIAKER (399 aa)). 2 coiled-coil regions span residues 887-918 (DKASRVSVEMLEKNVKQMGRQLQQLEKNLETF) and 988-1038 (MLAL…GDET). Residues 1036 to 1066 (DETGVMDSLLEALQSGAAFRDRRKRTPKLKD) form the DAD domain. Residues S1072 and S1157 each carry the phosphoserine modification. A Nuclear export signal motif is present at residues 1162–1171 (EALLARLRAL).

The protein belongs to the formin homology family. Diaphanous subfamily. Post-translationally, ubiquitinated.

The protein resides in the cytoplasm. It localises to the nucleus. Actin nucleation and elongation factor required for the assembly of F-actin structures, such as actin cables and stress fibers. Required for cytokinesis, stress fiber formation and transcriptional activation of the serum response factor. Binds to GTP-bound form of Rho and to profilin: acts in a Rho-dependent manner to recruit profilin to the membrane, where it promotes actin polymerization. DFR proteins couple Rho and Src tyrosine kinase during signaling and the regulation of actin dynamics. Also acts as an actin nucleation and elongation factor in the nucleus by promoting nuclear actin polymerization inside the nucleus to drive serum-dependent SRF-MRTFA activity. The protein is Protein diaphanous homolog 3 (Diaph3) of Mus musculus (Mouse).